A 428-amino-acid chain; its full sequence is Serine--tRNA ligase (428 aa).

231 to 233 (TAE) serves as a coordination point for L-serine. 262–264 (RSE) serves as a coordination point for ATP. Glu-285 contributes to the L-serine binding site. 349–352 (EISS) provides a ligand contact to ATP. Ser-385 contributes to the L-serine binding site.

This sequence belongs to the class-II aminoacyl-tRNA synthetase family. Type-1 seryl-tRNA synthetase subfamily. As to quaternary structure, homodimer. The tRNA molecule binds across the dimer.

The protein resides in the cytoplasm. It carries out the reaction tRNA(Ser) + L-serine + ATP = L-seryl-tRNA(Ser) + AMP + diphosphate + H(+). It catalyses the reaction tRNA(Sec) + L-serine + ATP = L-seryl-tRNA(Sec) + AMP + diphosphate + H(+). It participates in aminoacyl-tRNA biosynthesis; selenocysteinyl-tRNA(Sec) biosynthesis; L-seryl-tRNA(Sec) from L-serine and tRNA(Sec): step 1/1. Functionally, catalyzes the attachment of serine to tRNA(Ser). Is also able to aminoacylate tRNA(Sec) with serine, to form the misacylated tRNA L-seryl-tRNA(Sec), which will be further converted into selenocysteinyl-tRNA(Sec). The polypeptide is Serine--tRNA ligase (Staphylococcus aureus (strain MRSA252)).